Consider the following 504-residue polypeptide: Deoxyguanosinetriphosphate triphosphohydrolase (504 aa).

Residues 66 to 273 form the HD domain; it reads RLTHSLEVQQ…MEAADDISYC (208 aa).

The protein belongs to the dGTPase family. Type 1 subfamily. Homotetramer. Mg(2+) is required as a cofactor.

The enzyme catalyses dGTP + H2O = 2'-deoxyguanosine + triphosphate + H(+). DGTPase preferentially hydrolyzes dGTP over the other canonical NTPs. In Cronobacter sakazakii (strain ATCC BAA-894) (Enterobacter sakazakii), this protein is Deoxyguanosinetriphosphate triphosphohydrolase.